The following is a 184-amino-acid chain: Gastrokine-1 (184 aa).

The N-terminal stretch at 1–20 (MKLTMFVVGLLGLLAAPGFA) is a signal peptide. The region spanning 54–148 (NNGWDSWNSL…MCRGIPTYVA (95 aa)) is the BRICHOS domain. The cysteines at positions 81 and 140 are disulfide-linked.

The protein belongs to the gastrokine family. In terms of tissue distribution, expressed in the stomach. Highly expressed specifically in surface cells of the antrum mucosa from where it is secreted.

The protein resides in the secreted. The protein localises to the cytoplasmic granule. Its subcellular location is the golgi apparatus. Functionally, has mitogenic activity and may be involved in maintaining the integrity of the gastric mucosal epithelium. The polypeptide is Gastrokine-1 (Gkn1) (Mus musculus (Mouse)).